Reading from the N-terminus, the 24-residue chain is Chlorate reductase subunit beta (24 aa).

In terms of assembly, heterotrimer of alpha, beta and gamma subunits. [3Fe-4S] cluster is required as a cofactor. The cofactor is [4Fe-4S] cluster.

It localises to the cytoplasm. Its function is as follows. Electron transfer subunit of the chlorate reductase. In Stutzerimonas chloritidismutans (Pseudomonas chloritidismutans), this protein is Chlorate reductase subunit beta.